The chain runs to 521 residues: Type-1 glutamine synthetase 2 (521 aa).

The GS beta-grasp domain maps to 76–176 (NQIKISKSPF…FLMDFIGTNG (101 aa)). The 339-residue stretch at 183–521 (PRSTLKKVIK…WELERYLEII (339 aa)) folds into the GS catalytic domain.

Belongs to the glutamine synthetase family.

It carries out the reaction L-glutamate + NH4(+) + ATP = L-glutamine + ADP + phosphate + H(+). This chain is Type-1 glutamine synthetase 2 (glnA2), found in Dictyostelium discoideum (Social amoeba).